Reading from the N-terminus, the 214-residue chain is dITP/XTP pyrophosphatase (214 aa).

16–21 (THNPGK) serves as a coordination point for substrate. The Mg(2+) site is built by Asp48 and Asp77. The Proton acceptor role is filled by Asp77. Residues Ser78, 163–166 (FGYD), Lys186, and 198–199 (HR) each bind substrate.

This sequence belongs to the HAM1 NTPase family. As to quaternary structure, homodimer. Mg(2+) is required as a cofactor.

It catalyses the reaction XTP + H2O = XMP + diphosphate + H(+). The catalysed reaction is dITP + H2O = dIMP + diphosphate + H(+). It carries out the reaction ITP + H2O = IMP + diphosphate + H(+). Its function is as follows. Pyrophosphatase that catalyzes the hydrolysis of nucleoside triphosphates to their monophosphate derivatives, with a high preference for the non-canonical purine nucleotides XTP (xanthosine triphosphate), dITP (deoxyinosine triphosphate) and ITP. Seems to function as a house-cleaning enzyme that removes non-canonical purine nucleotides from the nucleotide pool, thus preventing their incorporation into DNA/RNA and avoiding chromosomal lesions. The sequence is that of dITP/XTP pyrophosphatase from Bradyrhizobium sp. (strain BTAi1 / ATCC BAA-1182).